The primary structure comprises 606 residues: NADH-ubiquinone oxidoreductase chain 5 (606 aa).

A run of 16 helical transmembrane segments spans residues 1 to 21, 35 to 55, 87 to 107, 114 to 134, 140 to 160, 171 to 191, 211 to 233, 241 to 261, 272 to 292, 301 to 320, 325 to 347, 366 to 386, 413 to 433, 457 to 477, 482 to 502, and 582 to 602; these read MNLF…PIMM, YVKN…MVYL, LMFM…SMWY, INQF…LVTA, LFIG…WWFG, AILY…WFLS, FPLM…HPWL, TPVS…FLLV, LIQT…AICA, IIAF…IGLN, AFLH…GSII, LPFT…MPFL, LIAT…ALLG, LLVG…PMTT, MPLH…IIAF, and GLIK…MILF.

This sequence belongs to the complex I subunit 5 family. As to quaternary structure, core subunit of respiratory chain NADH dehydrogenase (Complex I) which is composed of 45 different subunits.

It is found in the mitochondrion inner membrane. It catalyses the reaction a ubiquinone + NADH + 5 H(+)(in) = a ubiquinol + NAD(+) + 4 H(+)(out). Functionally, core subunit of the mitochondrial membrane respiratory chain NADH dehydrogenase (Complex I) which catalyzes electron transfer from NADH through the respiratory chain, using ubiquinone as an electron acceptor. Essential for the catalytic activity and assembly of complex I. This chain is NADH-ubiquinone oxidoreductase chain 5 (MT-ND5), found in Balaenoptera physalus (Fin whale).